The sequence spans 390 residues: Guanine nucleotide exchange factor for Rab-3A (390 aa).

Residues 1-60 form a disordered region; that stretch reads MWSGQPHPDEGHPPPLEAVPVPWKSVGPCKSHRESLGGLPETPAGEEAQGEEGPAATQLD. Residues 40–58 are compositionally biased toward low complexity; that stretch reads PETPAGEEAQGEEGPAATQ. Residues 73–161 are a coiled coil; it reads EKGSEFLKEE…AEVTALKTLV (89 aa). Residues 166-194 are disordered; that stretch reads PASPNRELHPQLLSPTKAGPRKGHLRHKS. A phosphoserine mark is found at Ser-168 and Ser-179. Basic residues predominate over residues 184 to 194; that stretch reads GPRKGHLRHKS.

Belongs to the SEC2 family. As to quaternary structure, interacts with RAB3A and IHPK1 through the coiled-coil domain. This interaction is competitive. IHPK1 kinase activity is not required for this interaction.

Its function is as follows. Guanine nucleotide exchange factor (GEF) which may activate RAB3A, a GTPase that regulates synaptic vesicle exocytosis. Promotes the exchange of GDP to GTP, converting inactive GDP-bound Rab proteins into their active GTP-bound form. May also activate RAB8A and RAB8B. This Bos taurus (Bovine) protein is Guanine nucleotide exchange factor for Rab-3A (RAB3IL1).